Reading from the N-terminus, the 295-residue chain is uncharacterized protein (295 aa).

The signal sequence occupies residues 1 to 19; it reads MRKLLLIITVFFTFNVAQA.

This is an uncharacterized protein from Rickettsia conorii (strain ATCC VR-613 / Malish 7).